The sequence spans 82 residues: Small ribosomal subunit protein bS16 (82 aa).

It belongs to the bacterial ribosomal protein bS16 family.

This is Small ribosomal subunit protein bS16 from Synechocystis sp. (strain ATCC 27184 / PCC 6803 / Kazusa).